A 143-amino-acid chain; its full sequence is Peptide methionine sulfoxide reductase MsrB (143 aa).

Residues D16–K139 form the MsrB domain. 4 residues coordinate Zn(2+): C55, C58, C104, and C107. The active-site Nucleophile is the C128.

It belongs to the MsrB Met sulfoxide reductase family. Requires Zn(2+) as cofactor.

It catalyses the reaction L-methionyl-[protein] + [thioredoxin]-disulfide + H2O = L-methionyl-(R)-S-oxide-[protein] + [thioredoxin]-dithiol. In Burkholderia thailandensis (strain ATCC 700388 / DSM 13276 / CCUG 48851 / CIP 106301 / E264), this protein is Peptide methionine sulfoxide reductase MsrB.